The chain runs to 210 residues: Probable GTP-binding protein EngB (210 aa).

An EngB-type G domain is found at 30-204 (QGYEVAFAGR…YRVLADWMEL (175 aa)). Residues 38–45 (GRSNAGKS), 64–68 (GRTQL), 82–85 (DLPG), 149–152 (TKAD), and 182–185 (LFSA) contribute to the GTP site. Residues serine 45 and threonine 66 each contribute to the Mg(2+) site.

It belongs to the TRAFAC class TrmE-Era-EngA-EngB-Septin-like GTPase superfamily. EngB GTPase family. Mg(2+) serves as cofactor.

In terms of biological role, necessary for normal cell division and for the maintenance of normal septation. This is Probable GTP-binding protein EngB from Pseudomonas putida (strain ATCC 700007 / DSM 6899 / JCM 31910 / BCRC 17059 / LMG 24140 / F1).